Reading from the N-terminus, the 61-residue chain is Small ribosomal subunit protein uS14 (61 aa).

Zn(2+)-binding residues include cysteine 24, cysteine 27, cysteine 40, and cysteine 43.

Belongs to the universal ribosomal protein uS14 family. Zinc-binding uS14 subfamily. As to quaternary structure, part of the 30S ribosomal subunit. Contacts proteins S3 and S10. Zn(2+) serves as cofactor.

Its function is as follows. Binds 16S rRNA, required for the assembly of 30S particles and may also be responsible for determining the conformation of the 16S rRNA at the A site. This Frankia alni (strain DSM 45986 / CECT 9034 / ACN14a) protein is Small ribosomal subunit protein uS14.